The sequence spans 228 residues: NADH-quinone oxidoreductase subunit C (228 aa).

This sequence belongs to the complex I 30 kDa subunit family. As to quaternary structure, NDH-1 is composed of 14 different subunits. Subunits NuoB, C, D, E, F, and G constitute the peripheral sector of the complex.

Its subcellular location is the cell membrane. It catalyses the reaction a quinone + NADH + 5 H(+)(in) = a quinol + NAD(+) + 4 H(+)(out). Functionally, NDH-1 shuttles electrons from NADH, via FMN and iron-sulfur (Fe-S) centers, to quinones in the respiratory chain. The immediate electron acceptor for the enzyme in this species is believed to be a menaquinone. Couples the redox reaction to proton translocation (for every two electrons transferred, four hydrogen ions are translocated across the cytoplasmic membrane), and thus conserves the redox energy in a proton gradient. In Mycobacteroides abscessus (strain ATCC 19977 / DSM 44196 / CCUG 20993 / CIP 104536 / JCM 13569 / NCTC 13031 / TMC 1543 / L948) (Mycobacterium abscessus), this protein is NADH-quinone oxidoreductase subunit C.